The sequence spans 314 residues: Melanocyte-stimulating hormone receptor (314 aa).

The Extracellular portion of the chain corresponds to 1–35; that stretch reads MSMLAPLRLVREPWNASEGNQSNATAGAGGAWCQG. N15, N20, and N23 each carry an N-linked (GlcNAc...) asparagine glycan. Residues 36 to 61 traverse the membrane as a helical segment; sequence LDIPNELFLTLGLVSLVENLLVVAAI. Over 62–70 the chain is Cytoplasmic; that stretch reads LKNRNLHSP. Residues 71-91 traverse the membrane as a helical segment; sequence TYYFICCLAVSDMLVSVSNLA. Topologically, residues 92 to 116 are extracellular; the sequence is KTLFMLLMEHGVLVIRASIVRHMDN. Residues 117–138 form a helical membrane-spanning segment; that stretch reads VIDMLICSSVVSSLSFLGVIAV. Topologically, residues 139–161 are cytoplasmic; sequence DRYITIFYALRYHSIMTLQRAVV. Residues 162-181 traverse the membrane as a helical segment; the sequence is TMASVWLASTVSSTVLITYY. Residues 182–189 are Extracellular-facing; sequence RNNAILLC. The chain crosses the membrane as a helical span at residues 190–209; that stretch reads LIGFFLFMLVLMLVLYIHMF. Residues 210–237 lie on the Cytoplasmic side of the membrane; sequence ALACHHVRSISSQQKQPTIYRTSSLKGA. A helical membrane pass occupies residues 238 to 263; sequence VTLTILLGVFFICWGPFFFHLILIVT. The Extracellular portion of the chain corresponds to 264-276; the sequence is CPTNPFCTCFFSY. The chain crosses the membrane as a helical span at residues 277–297; the sequence is FNLFLILIICNSVVDPLIYAF. At 298–314 the chain is on the cytoplasmic side; sequence RSQELRRTLREVVLCSW. The S-palmitoyl cysteine moiety is linked to residue C312.

The protein belongs to the G-protein coupled receptor 1 family.

The protein localises to the cell membrane. In terms of biological role, receptor for MSH (alpha, beta and gamma) and ACTH. The activity of this receptor is mediated by G proteins which activate adenylate cyclase. Mediates melanogenesis via regulation of cAMP signaling in melanocytes. The chain is Melanocyte-stimulating hormone receptor (MC1R) from Gallus gallus (Chicken).